A 197-amino-acid chain; its full sequence is Large ribosomal subunit protein uL10 (197 aa).

Residues 163–197 (GAPAAAEAPAAEESADSAAEAAAEAPAEAPAAEEN) form a disordered region.

Belongs to the universal ribosomal protein uL10 family. Part of the ribosomal stalk of the 50S ribosomal subunit. The N-terminus interacts with L11 and the large rRNA to form the base of the stalk. The C-terminus forms an elongated spine to which L12 dimers bind in a sequential fashion forming a multimeric L10(L12)X complex.

Functionally, forms part of the ribosomal stalk, playing a central role in the interaction of the ribosome with GTP-bound translation factors. In Pseudarthrobacter chlorophenolicus (strain ATCC 700700 / DSM 12829 / CIP 107037 / JCM 12360 / KCTC 9906 / NCIMB 13794 / A6) (Arthrobacter chlorophenolicus), this protein is Large ribosomal subunit protein uL10.